The chain runs to 813 residues: Disintegrin and metalloproteinase domain-containing protein 33 (813 aa).

The signal sequence occupies residues 1-29; the sequence is MGWRPRRARGTPLLLLLLLLLLWPVPGAG. Positions 30-203 are excised as a propeptide; the sequence is VLQGHIPGQP…PGGPQSRGRR (174 aa). Residues 30 to 701 lie on the Extracellular side of the membrane; the sequence is VLQGHIPGQP…GPVQAENHDT (672 aa). Asn-109 carries N-linked (GlcNAc...) asparagine glycosylation. The Cysteine switch signature appears at 131 to 138; it reads CTCSGMSG. Zn(2+) is bound at residue Cys-133. Asn-145 carries an N-linked (GlcNAc...) asparagine glycan. A disordered region spans residues 184-205; that stretch reads PGNKAGMTSLPGGPQSRGRREA. Positions 210 to 409 constitute a Peptidase M12B domain; that stretch reads KYLELYIVAD…GGGACLSNAP (200 aa). N-linked (GlcNAc...) asparagine glycosylation is found at Asn-231 and Asn-276. 3 disulfides stabilise this stretch: Cys-320–Cys-404, Cys-360–Cys-388, and Cys-361–Cys-371. Residue His-345 participates in Zn(2+) binding. Glu-346 is a catalytic residue. His-349 and His-355 together coordinate Zn(2+). Positions 417-503 constitute a Disintegrin domain; it reads PALCGNGFVE…HCPPDVYLLD (87 aa). The N-linked (GlcNAc...) asparagine glycan is linked to Asn-448. Cystine bridges form between Cys-475–Cys-495, Cys-653–Cys-663, Cys-657–Cys-669, and Cys-671–Cys-680. The 33-residue stretch at 649-681 folds into the EGF-like domain; that stretch reads ELQRCLTACHSHGVCNSNHNCHCAPGWAPPFCD. Residues 702–722 form a helical membrane-spanning segment; sequence FLLAMLLSVLLPLLPGAGLAW. Over 723 to 813 the chain is Cytoplasmic; it reads CCYRLPGAHL…QVQMPRSCLW (91 aa). Residues 746–813 form a disordered region; it reads SGPKDGPHRD…QVQMPRSCLW (68 aa). The segment covering 780–791 has biased composition (basic and acidic residues); the sequence is ENSHEPSSHPEK.

The cofactor is Zn(2+). In terms of processing, the precursor is cleaved by a furin endopeptidase. As to expression, expressed in all tissues, except liver, with high expression in placenta, lung, spleen and veins.

The protein localises to the membrane. The protein is Disintegrin and metalloproteinase domain-containing protein 33 (ADAM33) of Homo sapiens (Human).